The sequence spans 517 residues: Type II methyltransferase M.CeqI (517 aa).

Disordered stretches follow at residues 1–21 (MVVTSSAGCASRPRGRGRWPR) and 33–62 (GRPRRPFLRPTVPGPTSARPRRGRAPHGRS). Residues 51 to 62 (RPRRGRAPHGRS) show a composition bias toward basic residues. 3 TPR repeats span residues 283–316 (AEFYFRLGESYFAHHQYTFAVSYLEQAIDLFENN), 361–394 (ALLLRALGLNRVRQRKLYEAEMYFAEALTIGDHS), and 476–509 (SELAEEIAEYYKQQSLLEKAFYYMKEALHYRTNM).

The catalysed reaction is a 2'-deoxyadenosine in DNA + S-adenosyl-L-methionine = an N(6)-methyl-2'-deoxyadenosine in DNA + S-adenosyl-L-homocysteine + H(+). Its function is as follows. A methylase, recognizes the double-stranded sequence 5'-GATATC-3', methylates A-? on both strands, and protects the DNA from cleavage by the CeqI endonuclease. In Rhodococcus hoagii (Corynebacterium equii), this protein is Type II methyltransferase M.CeqI (ceqIM).